Reading from the N-terminus, the 94-residue chain is Ferredoxin-like protein (94 aa).

2 4Fe-4S ferredoxin-type domains span residues 20-52 and 53-83; these read PHIRIKDPDHCTELSEKQCTVCCPAGCYTRETN and GKVTLVTDGCLECGTCRIICQDSGNLEWEWP.

The protein to ferredoxins from P.putida and C.tartarivorum, ferredoxin I from A.vinelandii, ferredoxin II from D.desulfuricans.

Could be a 3Fe-4S cluster-containing protein. The chain is Ferredoxin-like protein (fixX) from Azotobacter vinelandii.